Consider the following 405-residue polypeptide: BRCA1-A complex subunit Abraxas 1 (405 aa).

Residues S7–L153 enclose the MPN domain. A coiled-coil region spans residues S208 to I262. The interval L365 to F405 is disordered. Position 402 is a phosphoserine (S402). Positions S402–F405 match the pSXXF motif motif.

It belongs to the FAM175 family. Abraxas subfamily. As to quaternary structure, component of the BRCA1-A complex. Component of the BRISC complex. Homodimer. Interacts directly (when phosphorylated at Ser-402) with BRCA1. The phosphorylated homodimer can interact directly with two BRCA1 chains, giving rise to a heterotetramer. Post-translationally, phosphorylation of Ser-402 of the pSXXF motif by ATM or ATR constitutes a specific recognition motif for the BRCT domain of BRCA1.

The protein resides in the nucleus. Its function is as follows. Involved in DNA damage response and double-strand break (DSB) repair. Component of the BRCA1-A complex, acting as a central scaffold protein that assembles the various components of the complex and mediates the recruitment of BRCA1. The BRCA1-A complex specifically recognizes 'Lys-63'-linked ubiquitinated histones H2A and H2AX at DNA lesion sites, leading to target the BRCA1-BARD1 heterodimer to sites of DNA damage at DSBs. This complex also possesses deubiquitinase activity that specifically removes 'Lys-63'-linked ubiquitin on histones H2A and H2AX. In Gallus gallus (Chicken), this protein is BRCA1-A complex subunit Abraxas 1.